The sequence spans 1073 residues: Lon protease homolog, mitochondrial (1073 aa).

Residues 1–27 (MIKASKCNKARALFLVRTSIPRTFIRN) constitute a mitochondrion transit peptide. Composition is skewed to basic and acidic residues over residues 69 to 107 (FDSKKEKQPSTDKSNDKDKPSRKEKGKDKEKENEERKDI) and 113 to 123 (YDIKEETDSKP). The segment at 69 to 173 (FDSKKEKQPS…DKEFLSPSDA (105 aa)) is disordered. Residues 132-150 (SSKSSISSSSGGANNNNNN) show a composition bias toward low complexity. The span at 158–167 (DDGSPKDKEF) shows a compositional bias: basic and acidic residues. In terms of domain architecture, Lon N-terminal spans 177-395 (PPFLAIAMKD…LSLQLLQVEA (219 aa)). Residue 543–550 (GPPGTGKT) coordinates ATP. Residues 775-785 (SVISDKAKKDA) show a composition bias toward basic and acidic residues. Residues 775–821 (SVISDKAKKDAGSSSIESNDSNTEAKVSTTTENEKKQEQKQKQDEEI) form a disordered region. Residues 790–805 (IESNDSNTEAKVSTTT) show a composition bias toward polar residues. Residues 806–821 (ENEKKQEQKQKQDEEI) are compositionally biased toward basic and acidic residues. A Lon proteolytic domain is found at 856–1044 (TLNPGVATGL…SEVFEHLFKG (189 aa)). Residues S950 and K993 contribute to the active site.

This sequence belongs to the peptidase S16 family. Homohexamer or homoheptamer. Organized in a ring with a central cavity.

It localises to the mitochondrion matrix. The enzyme catalyses Hydrolysis of proteins in presence of ATP.. ATP-dependent serine protease that mediates the selective degradation of misfolded, unassembled or oxidatively damaged polypeptides as well as certain short-lived regulatory proteins in the mitochondrial matrix. May also have a chaperone function in the assembly of inner membrane protein complexes. Participates in the regulation of mitochondrial gene expression and in the maintenance of the integrity of the mitochondrial genome. Binds to mitochondrial DNA in a site-specific manner. The chain is Lon protease homolog, mitochondrial from Candida dubliniensis (strain CD36 / ATCC MYA-646 / CBS 7987 / NCPF 3949 / NRRL Y-17841) (Yeast).